We begin with the raw amino-acid sequence, 252 residues long: 3-dehydroquinate dehydratase (252 aa).

3-dehydroquinate contacts are provided by residues serine 21, glutamate 46 to arginine 48, and arginine 82. Histidine 143 acts as the Proton donor/acceptor in catalysis. Lysine 170 (schiff-base intermediate with substrate) is an active-site residue. Arginine 213, serine 232, and glutamine 236 together coordinate 3-dehydroquinate.

This sequence belongs to the type-I 3-dehydroquinase family. As to quaternary structure, homodimer.

The enzyme catalyses 3-dehydroquinate = 3-dehydroshikimate + H2O. Its pathway is metabolic intermediate biosynthesis; chorismate biosynthesis; chorismate from D-erythrose 4-phosphate and phosphoenolpyruvate: step 3/7. In terms of biological role, involved in the third step of the chorismate pathway, which leads to the biosynthesis of aromatic amino acids. Catalyzes the cis-dehydration of 3-dehydroquinate (DHQ) and introduces the first double bond of the aromatic ring to yield 3-dehydroshikimate. The protein is 3-dehydroquinate dehydratase of Salmonella paratyphi A (strain ATCC 9150 / SARB42).